The chain runs to 390 residues: Tuftelin (390 aa).

Coiled coils occupy residues 88-126 and 163-352; these read DKMTHEKNIDQLKSEVQYIQEARNCLQKLREDISSKLDR and PSMS…EKQV. The segment at 356–383 is disordered; that stretch reads NFSTQARAKTENLGSVRISKPPSPKPMP.

It belongs to the tuftelin family. Interacts with TFIP11. May form oligomers. As to expression, ameloblasts, and also non-odontogenic tissues including kidney, lung, liver and testis.

The protein localises to the secreted. In terms of biological role, involved in the structural organization of the epidermis. Involved in the mineralization and structural organization of enamel. This chain is Tuftelin (Tuft1), found in Mus musculus (Mouse).